Here is a 221-residue protein sequence, read N- to C-terminus: Small ribosomal subunit protein uS3 (221 aa).

Residues 39–108 enclose the KH type-2 domain; it reads IRKFVKKRSY…NVIINIVEVK (70 aa).

Belongs to the universal ribosomal protein uS3 family. Part of the 30S ribosomal subunit. Forms a tight complex with proteins S10 and S14.

Functionally, binds the lower part of the 30S subunit head. Binds mRNA in the 70S ribosome, positioning it for translation. This chain is Small ribosomal subunit protein uS3, found in Clostridium novyi (strain NT).